The primary structure comprises 339 residues: Heat-inducible transcription repressor HrcA (339 aa).

It belongs to the HrcA family.

Negative regulator of class I heat shock genes (grpE-dnaK-dnaJ and groELS operons). Prevents heat-shock induction of these operons. The polypeptide is Heat-inducible transcription repressor HrcA (Paraburkholderia phytofirmans (strain DSM 17436 / LMG 22146 / PsJN) (Burkholderia phytofirmans)).